We begin with the raw amino-acid sequence, 136 residues long: Large-conductance mechanosensitive channel (136 aa).

The next 2 helical transmembrane spans lie at 10-30 (FAMR…AAFG) and 76-96 (GAFI…FIAI).

It belongs to the MscL family. As to quaternary structure, homopentamer.

Its subcellular location is the cell inner membrane. Its function is as follows. Channel that opens in response to stretch forces in the membrane lipid bilayer. May participate in the regulation of osmotic pressure changes within the cell. The protein is Large-conductance mechanosensitive channel of Pectobacterium atrosepticum (strain SCRI 1043 / ATCC BAA-672) (Erwinia carotovora subsp. atroseptica).